The sequence spans 592 residues: Aspartate--tRNA(Asp/Asn) ligase (592 aa).

Glu171 lines the L-aspartate pocket. The aspartate stretch occupies residues 195–198 (QLFK). Arg217 provides a ligand contact to L-aspartate. ATP-binding positions include 217 to 219 (RDE) and Gln226. His447 contacts L-aspartate. Glu481 contacts ATP. Residue Arg488 participates in L-aspartate binding. 533 to 536 (GLDR) lines the ATP pocket.

The protein belongs to the class-II aminoacyl-tRNA synthetase family. Type 1 subfamily. As to quaternary structure, homodimer.

It localises to the cytoplasm. It catalyses the reaction tRNA(Asx) + L-aspartate + ATP = L-aspartyl-tRNA(Asx) + AMP + diphosphate. In terms of biological role, aspartyl-tRNA synthetase with relaxed tRNA specificity since it is able to aspartylate not only its cognate tRNA(Asp) but also tRNA(Asn). Reaction proceeds in two steps: L-aspartate is first activated by ATP to form Asp-AMP and then transferred to the acceptor end of tRNA(Asp/Asn). The chain is Aspartate--tRNA(Asp/Asn) ligase from Psychromonas ingrahamii (strain DSM 17664 / CCUG 51855 / 37).